The chain runs to 694 residues: Elongation factor G (694 aa).

The region spanning 9–288 is the tr-type G domain; it reads DAIRNIGIMA…VIVKWLPSPL (280 aa). GTP is bound by residues 18 to 25, 82 to 86, and 136 to 139; these read AHIDAGKT, DTPGH, and NKMD.

The protein belongs to the TRAFAC class translation factor GTPase superfamily. Classic translation factor GTPase family. EF-G/EF-2 subfamily.

The protein localises to the cytoplasm. Functionally, catalyzes the GTP-dependent ribosomal translocation step during translation elongation. During this step, the ribosome changes from the pre-translocational (PRE) to the post-translocational (POST) state as the newly formed A-site-bound peptidyl-tRNA and P-site-bound deacylated tRNA move to the P and E sites, respectively. Catalyzes the coordinated movement of the two tRNA molecules, the mRNA and conformational changes in the ribosome. The sequence is that of Elongation factor G (fusA) from Chlamydia muridarum (strain MoPn / Nigg).